A 366-amino-acid chain; its full sequence is Histidinol-phosphate aminotransferase 2 (366 aa).

Residue K226 is modified to N6-(pyridoxal phosphate)lysine.

Belongs to the class-II pyridoxal-phosphate-dependent aminotransferase family. Histidinol-phosphate aminotransferase subfamily. In terms of assembly, homodimer. Pyridoxal 5'-phosphate is required as a cofactor.

The enzyme catalyses L-histidinol phosphate + 2-oxoglutarate = 3-(imidazol-4-yl)-2-oxopropyl phosphate + L-glutamate. It participates in amino-acid biosynthesis; L-histidine biosynthesis; L-histidine from 5-phospho-alpha-D-ribose 1-diphosphate: step 7/9. This is Histidinol-phosphate aminotransferase 2 from Cupriavidus pinatubonensis (strain JMP 134 / LMG 1197) (Cupriavidus necator (strain JMP 134)).